Consider the following 352-residue polypeptide: GTPase Obg (352 aa).

The region spanning 1–159 (MQFIDQAEIQ…RMLRLELKLL (159 aa)) is the Obg domain. Residues 160–330 (AEVGIIGLPN…LMQEIWGLLE (171 aa)) form the OBG-type G domain. GTP-binding positions include 166-173 (GLPNAGKS), 191-195 (FTTLV), 213-216 (DIPG), 280-283 (NKVD), and 311-313 (SAV). Mg(2+) is bound by residues S173 and T193.

Belongs to the TRAFAC class OBG-HflX-like GTPase superfamily. OBG GTPase family. As to quaternary structure, monomer. Mg(2+) serves as cofactor.

It localises to the cytoplasm. In terms of biological role, an essential GTPase which binds GTP, GDP and possibly (p)ppGpp with moderate affinity, with high nucleotide exchange rates and a fairly low GTP hydrolysis rate. Plays a role in control of the cell cycle, stress response, ribosome biogenesis and in those bacteria that undergo differentiation, in morphogenesis control. This Trichodesmium erythraeum (strain IMS101) protein is GTPase Obg.